We begin with the raw amino-acid sequence, 499 residues long: Ribose import ATP-binding protein RbsA (499 aa).

2 ABC transporter domains span residues Val3–Ala240 and Leu250–Asp494. Gly35–Ser42 contacts ATP.

Belongs to the ABC transporter superfamily. Ribose importer (TC 3.A.1.2.1) family. In terms of assembly, the complex is composed of an ATP-binding protein (RbsA), two transmembrane proteins (RbsC) and a solute-binding protein (RbsB).

It is found in the cell membrane. The catalysed reaction is D-ribose(out) + ATP + H2O = D-ribose(in) + ADP + phosphate + H(+). Part of the ABC transporter complex RbsABC involved in ribose import. Responsible for energy coupling to the transport system. This Halalkalibacterium halodurans (strain ATCC BAA-125 / DSM 18197 / FERM 7344 / JCM 9153 / C-125) (Bacillus halodurans) protein is Ribose import ATP-binding protein RbsA.